We begin with the raw amino-acid sequence, 161 residues long: Cysteine dioxygenase (161 aa).

The Fe cation site is built by His75, His77, and His125.

The protein belongs to the cysteine dioxygenase family. Requires Fe cation as cofactor.

The enzyme catalyses L-cysteine + O2 = 3-sulfino-L-alanine + H(+). The protein is Cysteine dioxygenase (cdoA) of Bacillus subtilis (strain 168).